We begin with the raw amino-acid sequence, 179 residues long: Transcription factor 21 (179 aa).

The segment at 23–87 (IKLDPNKEFG…QVQRNAANAR (65 aa)) is disordered. The span at 34–46 (SNDSNEESSTCDN) shows a compositional bias: polar residues. Over residues 50-64 (KKGRGTSGKRRKAPS) the composition is skewed to basic residues. Polar residues predominate over residues 70 to 80 (GNINQEGKQVQ). In terms of domain architecture, bHLH spans 79-131 (VQRNAANARERARMRVLSKAFSRLKTTLPWVPPDTKLSKLDTLRLASSYIAHL).

Efficient DNA binding requires dimerization with another bHLH protein.

It localises to the nucleus. Involved in epithelial-mesenchymal interactions in kidney and lung morphogenesis that include epithelial differentiation and branching morphogenesis. This is Transcription factor 21 (tcf21) from Xenopus tropicalis (Western clawed frog).